The primary structure comprises 270 residues: MSDLHNESIFITGGGSGLGLALVERFIEEGAQVATLELSAAKVASLRQRFGEHILAVEGNVTCYADYQRAVDQILTRSGKLDCFIGNAGIWDHNASLVNTPAETLETGFHELFNVNVLGYLLGAKACAPALIASEGSMIFTLSNAAWYPGGGGPLYTTSKHAATGLIRQLAYELAPKVRVNGVGPCGMASDLRGPQALGQSETSIMQSLTPEKIAAILPLQFFPQPADFTGPYVMLASRRNNRALSGVMINADAGLAIRGIRHVAAGLDL.

10-34 (FITGGGSGLGLALVERFIEEGAQVA) contributes to the NAD(+) binding site. Serine 143 contacts substrate. Tyrosine 156 functions as the Proton acceptor in the catalytic mechanism.

This sequence belongs to the short-chain dehydrogenases/reductases (SDR) family.

The catalysed reaction is 3-(cis-5,6-dihydroxycyclohexa-1,3-dien-1-yl)propanoate + NAD(+) = 3-(2,3-dihydroxyphenyl)propanoate + NADH + H(+). It catalyses the reaction (2E)-3-(cis-5,6-dihydroxycyclohexa-1,3-dien-1-yl)prop-2-enoate + NAD(+) = (2E)-3-(2,3-dihydroxyphenyl)prop-2-enoate + NADH + H(+). The protein operates within aromatic compound metabolism; 3-phenylpropanoate degradation. In terms of biological role, converts 3-phenylpropionate-dihydrodiol (PP-dihydrodiol) and cinnamic acid-dihydrodiol (CI-dihydrodiol) into 3-(2,3-dihydroxylphenyl)propanoic acid (DHPP) and 2,3-dihydroxicinnamic acid (DHCI), respectively. This Shigella flexneri serotype 5b (strain 8401) protein is 3-phenylpropionate-dihydrodiol/cinnamic acid-dihydrodiol dehydrogenase.